The sequence spans 238 residues: Large ribosomal subunit protein uL1 (238 aa).

This sequence belongs to the universal ribosomal protein uL1 family. In terms of assembly, part of the 50S ribosomal subunit.

Its function is as follows. Binds directly to 23S rRNA. The L1 stalk is quite mobile in the ribosome, and is involved in E site tRNA release. Protein L1 is also a translational repressor protein, it controls the translation of the L11 operon by binding to its mRNA. This is Large ribosomal subunit protein uL1 from Gloeobacter violaceus (strain ATCC 29082 / PCC 7421).